Here is a 987-residue protein sequence, read N- to C-terminus: ATP-dependent 6-phosphofructokinase subunit alpha (987 aa).

An N-terminal catalytic PFK domain 1 region spans residues 1 to 602 (MPSSSDAINR…DYRYFRDISI (602 aa)). Residues Gly-237, 300-301 (RC), and 330-333 (GDGS) each bind ATP. Asp-331 is a Mg(2+) binding site. Residues 376-378 (SID), Arg-413, 420-422 (MGR), Glu-477, Arg-504, and 510-513 (HVQR) each bind beta-D-fructose 6-phosphate. Asp-378 acts as the Proton acceptor in catalysis. The segment at 603–616 (YDDGSKQLSEDKRL) is interdomain linker. A C-terminal regulatory PFK domain 2 region spans residues 617-987 (NIAIVHVGAA…KSLLKKQERY (371 aa)). Residues Arg-686, 743-747 (TVSNN), Arg-781, 788-790 (QGG), Glu-848, Arg-874, 880-883 (HVQQ), and Arg-958 each bind beta-D-fructose 2,6-bisphosphate.

It belongs to the phosphofructokinase type A (PFKA) family. ATP-dependent PFK group I subfamily. Eukaryotic two domain clade 'E' sub-subfamily. As to quaternary structure, heterooctamer of 4 alpha and 4 beta chains. It depends on Mg(2+) as a cofactor.

Its subcellular location is the cytoplasm. The enzyme catalyses beta-D-fructose 6-phosphate + ATP = beta-D-fructose 1,6-bisphosphate + ADP + H(+). Its pathway is carbohydrate degradation; glycolysis; D-glyceraldehyde 3-phosphate and glycerone phosphate from D-glucose: step 3/4. Allosterically activated by ADP, AMP, or fructose 2,6-bisphosphate, and allosterically inhibited by ATP or citrate. Catalyzes the phosphorylation of D-fructose 6-phosphate to fructose 1,6-bisphosphate by ATP, the first committing step of glycolysis. This is ATP-dependent 6-phosphofructokinase subunit alpha (PFK1) from Candida albicans (Yeast).